A 120-amino-acid chain; its full sequence is MASRKEALVRRANRVRRQIKAVANGRPRLSVHRSSKNIYVQVIDDVAGRTLAAASTLDGSLRSSLKTGADTAAAAAVGKLVAERAVAAGVKEVVFDRGAFIYHGRIKALAEAAREGGLSF.

The protein belongs to the universal ribosomal protein uL18 family. In terms of assembly, part of the 50S ribosomal subunit; part of the 5S rRNA/L5/L18/L25 subcomplex. Contacts the 5S and 23S rRNAs.

Functionally, this is one of the proteins that bind and probably mediate the attachment of the 5S RNA into the large ribosomal subunit, where it forms part of the central protuberance. This Allorhizobium ampelinum (strain ATCC BAA-846 / DSM 112012 / S4) (Agrobacterium vitis (strain S4)) protein is Large ribosomal subunit protein uL18.